Reading from the N-terminus, the 187-residue chain is Elongation factor P (187 aa).

It belongs to the elongation factor P family.

The protein resides in the cytoplasm. Its pathway is protein biosynthesis; polypeptide chain elongation. Its function is as follows. Involved in peptide bond synthesis. Stimulates efficient translation and peptide-bond synthesis on native or reconstituted 70S ribosomes in vitro. Probably functions indirectly by altering the affinity of the ribosome for aminoacyl-tRNA, thus increasing their reactivity as acceptors for peptidyl transferase. This Tolumonas auensis (strain DSM 9187 / NBRC 110442 / TA 4) protein is Elongation factor P.